Reading from the N-terminus, the 272-residue chain is HMP-PP phosphatase (272 aa).

The active-site Nucleophile is D8. Residues D8, D10, and D212 each contribute to the Mg(2+) site.

Belongs to the HAD-like hydrolase superfamily. Cof family. Mg(2+) is required as a cofactor.

The catalysed reaction is 4-amino-2-methyl-5-(diphosphooxymethyl)pyrimidine + H2O = 4-amino-2-methyl-5-(phosphooxymethyl)pyrimidine + phosphate + H(+). Catalyzes the hydrolysis of 4-amino-2-methyl-5-hydroxymethylpyrimidine pyrophosphate (HMP-PP) to 4-amino-2-methyl-5-hydroxymethylpyrimidine phosphate (HMP-P). This Escherichia coli (strain 55989 / EAEC) protein is HMP-PP phosphatase.